The primary structure comprises 325 residues: Beta-ketoacyl-[acyl-carrier-protein] synthase III (325 aa).

Residues Cys-119 and His-252 contribute to the active site. The ACP-binding stretch occupies residues 253 to 257 (QANIR). Asn-282 is an active-site residue.

This sequence belongs to the thiolase-like superfamily. FabH family. In terms of assembly, homodimer.

The protein localises to the cytoplasm. It catalyses the reaction malonyl-[ACP] + acetyl-CoA + H(+) = 3-oxobutanoyl-[ACP] + CO2 + CoA. The protein operates within lipid metabolism; fatty acid biosynthesis. Its function is as follows. Catalyzes the condensation reaction of fatty acid synthesis by the addition to an acyl acceptor of two carbons from malonyl-ACP. Catalyzes the first condensation reaction which initiates fatty acid synthesis and may therefore play a role in governing the total rate of fatty acid production. Possesses both acetoacetyl-ACP synthase and acetyl transacylase activities. Its substrate specificity determines the biosynthesis of branched-chain and/or straight-chain of fatty acids. The chain is Beta-ketoacyl-[acyl-carrier-protein] synthase III from Delftia acidovorans (strain DSM 14801 / SPH-1).